The following is a 315-amino-acid chain: tRNA pseudouridine synthase B (315 aa).

Aspartate 47 serves as the catalytic Nucleophile.

This sequence belongs to the pseudouridine synthase TruB family. Type 1 subfamily.

The catalysed reaction is uridine(55) in tRNA = pseudouridine(55) in tRNA. Its function is as follows. Responsible for synthesis of pseudouridine from uracil-55 in the psi GC loop of transfer RNAs. In Shewanella amazonensis (strain ATCC BAA-1098 / SB2B), this protein is tRNA pseudouridine synthase B.